We begin with the raw amino-acid sequence, 439 residues long: Serine hydroxymethyltransferase (439 aa).

(6S)-5,6,7,8-tetrahydrofolate is bound at residue 127-129 (AHV). K233 bears the N6-(pyridoxal phosphate)lysine mark.

It belongs to the SHMT family. As to quaternary structure, homodimer. It depends on pyridoxal 5'-phosphate as a cofactor.

It localises to the cytoplasm. Its pathway is amino-acid biosynthesis; glycine biosynthesis; glycine from L-serine: step 1/1. In terms of biological role, catalyzes the reversible interconversion of serine and glycine with a modified folate serving as the one-carbon carrier. Also exhibits a pteridine-independent aldolase activity toward beta-hydroxyamino acids, producing glycine and aldehydes, via a retro-aldol mechanism. In Aeropyrum pernix (strain ATCC 700893 / DSM 11879 / JCM 9820 / NBRC 100138 / K1), this protein is Serine hydroxymethyltransferase.